The chain runs to 232 residues: Pyridoxine 5'-phosphate synthase (232 aa).

Residue Asn7 coordinates 3-amino-2-oxopropyl phosphate. A 1-deoxy-D-xylulose 5-phosphate-binding site is contributed by 9 to 10; that stretch reads DH. A 3-amino-2-oxopropyl phosphate-binding site is contributed by Arg18. His43 functions as the Proton acceptor in the catalytic mechanism. 1-deoxy-D-xylulose 5-phosphate contacts are provided by Arg45 and His50. Glu69 serves as the catalytic Proton acceptor. Thr99 contributes to the 1-deoxy-D-xylulose 5-phosphate binding site. The active-site Proton donor is the His185. 3-amino-2-oxopropyl phosphate-binding positions include Gly186 and 207 to 208; that span reads GH.

It belongs to the PNP synthase family. Homooctamer; tetramer of dimers.

The protein resides in the cytoplasm. It carries out the reaction 3-amino-2-oxopropyl phosphate + 1-deoxy-D-xylulose 5-phosphate = pyridoxine 5'-phosphate + phosphate + 2 H2O + H(+). Its pathway is cofactor biosynthesis; pyridoxine 5'-phosphate biosynthesis; pyridoxine 5'-phosphate from D-erythrose 4-phosphate: step 5/5. Functionally, catalyzes the complicated ring closure reaction between the two acyclic compounds 1-deoxy-D-xylulose-5-phosphate (DXP) and 3-amino-2-oxopropyl phosphate (1-amino-acetone-3-phosphate or AAP) to form pyridoxine 5'-phosphate (PNP) and inorganic phosphate. The sequence is that of Pyridoxine 5'-phosphate synthase from Gluconobacter oxydans (strain 621H) (Gluconobacter suboxydans).